A 450-amino-acid chain; its full sequence is Tubulin alpha chain (450 aa).

Gln11 provides a ligand contact to GTP. The residue at position 40 (Lys40) is an N6-acetyllysine. The GTP site is built by Glu71, Ser140, Gly144, Thr145, Thr179, Asn206, and Asn228. Glu71 serves as a coordination point for Mg(2+). Glu254 is a catalytic residue.

This sequence belongs to the tubulin family. Dimer of alpha and beta chains. A typical microtubule is a hollow water-filled tube with an outer diameter of 25 nm and an inner diameter of 15 nM. Alpha-beta heterodimers associate head-to-tail to form protofilaments running lengthwise along the microtubule wall with the beta-tubulin subunit facing the microtubule plus end conferring a structural polarity. Microtubules usually have 13 protofilaments but different protofilament numbers can be found in some organisms and specialized cells. It depends on Mg(2+) as a cofactor. Post-translationally, acetylation of alpha chains at Lys-40 stabilizes microtubules and affects affinity and processivity of microtubule motors. This modification has a role in multiple cellular functions, ranging from cell motility, cell cycle progression or cell differentiation to intracellular trafficking and signaling.

Its subcellular location is the cytoplasm. The protein resides in the cytoskeleton. It catalyses the reaction GTP + H2O = GDP + phosphate + H(+). Tubulin is the major constituent of microtubules, a cylinder consisting of laterally associated linear protofilaments composed of alpha- and beta-tubulin heterodimers. Microtubules grow by the addition of GTP-tubulin dimers to the microtubule end, where a stabilizing cap forms. Below the cap, tubulin dimers are in GDP-bound state, owing to GTPase activity of alpha-tubulin. This Tyrophagus putrescentiae (Mold mite) protein is Tubulin alpha chain.